We begin with the raw amino-acid sequence, 254 residues long: 23S rRNA (guanosine-2'-O-)-methyltransferase RlmB (254 aa).

S-adenosyl-L-methionine is bound by residues Gly-198, Ile-218, and Leu-227.

Belongs to the class IV-like SAM-binding methyltransferase superfamily. RNA methyltransferase TrmH family. RlmB subfamily. In terms of assembly, homodimer.

The protein localises to the cytoplasm. The enzyme catalyses guanosine(2251) in 23S rRNA + S-adenosyl-L-methionine = 2'-O-methylguanosine(2251) in 23S rRNA + S-adenosyl-L-homocysteine + H(+). Its function is as follows. Specifically methylates the ribose of guanosine 2251 in 23S rRNA. This chain is 23S rRNA (guanosine-2'-O-)-methyltransferase RlmB, found in Blochmanniella floridana.